The chain runs to 591 residues: Paralemmin-3 (591 aa).

4 repeats span residues 171–174, 183–186, 224–227, and 234–237; these read EKNK, EKNQ, and KNQD. Over residues 282 to 293 the composition is skewed to polar residues; it reads DQTQSTSDQNME. 3 disordered regions span residues 282–317, 332–413, and 515–591; these read DQTQSTSDQNMETKLPTDIPQQKESQSEGKIQTKDQ, KGTT…QNQD, and PDLK…CVVM. Composition is skewed to basic and acidic residues over residues 306-317 and 349-383; these read SQSEGKIQTKDQ and EPKEENPKAQDEKLDHHNESVSTVHEQKEVHDMDP. Composition is skewed to polar residues over residues 385–413 and 528–542; these read QLSTHQKSLSISEDQNQGSVSLSDPQNQD and QESSSHEPMSSTIAQ. Residues 543-554 show a composition bias toward low complexity; it reads SSSAEGNSSPES. The span at 559 to 575 shows a compositional bias: polar residues; the sequence is QKSQGTDSQQGGNTATQ. A Nuclear localization signal motif is present at residues 579–583; the sequence is RRKKK. S-palmitoyl cysteine attachment occurs at residues C585 and C587. Cysteine methyl ester is present on C588. C588 carries the S-farnesyl cysteine lipid modification. Positions 589-591 are cleaved as a propeptide — removed in mature form; it reads VVM.

Belongs to the paralemmin family. May be phosphorylated during oocyte maturation. Post-translationally, palmitoylated on Cys-585 and Cys-587 and prenylated on Cys-588; which is required for membrane association. In Xenopus oocyte, in the central nervous system cells of tadpoles and adult frogs, and transiently in epithelial cells of stomach and gut of tadpoles. Highly expressed in kidney.

Its subcellular location is the cytoplasm. It localises to the nucleus. The protein resides in the cell membrane. Functionally, maternal ATP-binding protein that may have multiple functions during development, one of which may be associated with the development and maintenance of the central nervous system. This Xenopus laevis (African clawed frog) protein is Paralemmin-3 (palm3).